Reading from the N-terminus, the 111-residue chain is MPRKITSYKTSLQGLREENEDVELMNLNLLLTGKPNNPKYAPIDLFIVCDGHGGKEVAEYVAPRLNRYIMNNNNTFPLHRQHVAKIYDAIQNELIGKGIARTWWMYCSSYY.

A coiled-coil region spans residues arginine 3 to leucine 29. The region spanning threonine 6–tyrosine 111 is the PPM-type phosphatase domain.

This is an uncharacterized protein from Acanthamoeba polyphaga mimivirus (APMV).